The chain runs to 128 residues: Fluoride-specific ion channel FluC (128 aa).

4 helical membrane-spanning segments follow: residues 4-24 (VFLL…VSTW), 35-55 (FGIL…WSIA), 67-87 (FLFT…LDTM), and 99-119 (LLNV…GIIL). The Na(+) site is built by Gly-74 and Thr-77.

This sequence belongs to the fluoride channel Fluc/FEX (TC 1.A.43) family.

It localises to the cell inner membrane. The enzyme catalyses fluoride(in) = fluoride(out). Na(+) is not transported, but it plays an essential structural role and its presence is essential for fluoride channel function. Its function is as follows. Fluoride-specific ion channel. Important for reducing fluoride concentration in the cell, thus reducing its toxicity. The sequence is that of Fluoride-specific ion channel FluC from Parabacteroides distasonis (strain ATCC 8503 / DSM 20701 / CIP 104284 / JCM 5825 / NCTC 11152).